A 165-amino-acid chain; its full sequence is uncharacterized protein (165 aa).

The tract at residues L68–S107 is disordered. Residues P94 to S107 show a composition bias toward pro residues.

This is an uncharacterized protein from Homo sapiens (Human).